The primary structure comprises 148 residues: Cystatin-D (148 aa).

A signal peptide spans 1–33 (MASLLSPSMPVLAAVALTLTLAVIPEASTNAEA). The Cystatin kininogen-type domain occupies 36-148 (VVLGGVEPAD…SMTNFNCYNF (113 aa)). 2 cysteine pairs are disulfide-bonded: C101–C111 and C125–C145.

This sequence belongs to the cystatin family. In terms of tissue distribution, in cartilage, expressed mainly in mature chondrocytes including prehypertrophic and hypertrophic cells (at protein level). Expressed exclusively in cartilage.

It localises to the cytoplasm. The protein resides in the cytosol. In terms of biological role, may play a role in the last steps of the chondrocyte differentiation pathway as an inducer of maturation. Induces chondrocyte calcification during endochondral ossification by playing a role in the transcriptional inhibition of ENPP1, a generator of pyrophosphate which inhibits calcification. Possibly impairs the binding of a transcription factor to the ENPP1 promoter. Unlike other cystatins, does not have thiol protease inhibitor activity. The sequence is that of Cystatin-D from Mus musculus (Mouse).